The following is a 155-amino-acid chain: Small ribosomal subunit protein uS7 (155 aa).

This sequence belongs to the universal ribosomal protein uS7 family. In terms of assembly, part of the 30S ribosomal subunit. Contacts proteins S9 and S11.

In terms of biological role, one of the primary rRNA binding proteins, it binds directly to 16S rRNA where it nucleates assembly of the head domain of the 30S subunit. Is located at the subunit interface close to the decoding center, probably blocks exit of the E-site tRNA. This chain is Small ribosomal subunit protein uS7, found in Thermotoga neapolitana (strain ATCC 49049 / DSM 4359 / NBRC 107923 / NS-E).